The sequence spans 200 residues: GMP synthase [glutamine-hydrolyzing] subunit A (200 aa).

The 191-residue stretch at 3-193 (KIYVVDNGGQ…IGICASYREI (191 aa)) folds into the Glutamine amidotransferase type-1 domain. The active-site Nucleophile is the C80. Active-site residues include H167 and E169.

In terms of assembly, heterodimer composed of a glutamine amidotransferase subunit (A) and a GMP-binding subunit (B).

The enzyme catalyses XMP + L-glutamine + ATP + H2O = GMP + L-glutamate + AMP + diphosphate + 2 H(+). It participates in purine metabolism; GMP biosynthesis; GMP from XMP (L-Gln route): step 1/1. Functionally, catalyzes the synthesis of GMP from XMP. The chain is GMP synthase [glutamine-hydrolyzing] subunit A from Thermoplasma acidophilum (strain ATCC 25905 / DSM 1728 / JCM 9062 / NBRC 15155 / AMRC-C165).